A 479-amino-acid polypeptide reads, in one-letter code: Aryl-phospho-beta-D-glucosidase BglA (479 aa).

Catalysis depends on E176, which acts as the Proton donor. E377 (nucleophile) is an active-site residue.

This sequence belongs to the glycosyl hydrolase 1 family.

The enzyme catalyses 6-phospho-beta-D-glucosyl-(1-&gt;4)-D-glucose + H2O = D-glucose 6-phosphate + D-glucose. Its function is as follows. Catalyzes the hydrolysis of aryl-phospho-beta-D-glucosides such as 4-methylumbelliferyl-phospho-beta-D-glucopyranoside (MUG-P), phosphoarbutin and phosphosalicin. Plays a major role in the utilization of arbutin or salicin as the sole carbon source. BglA and BglH are the major proteins contributing to hydrolysis of MUG-P by extracts of late-exponential-phase or stationary-phase B.subtilis cells. This Bacillus subtilis (strain 168) protein is Aryl-phospho-beta-D-glucosidase BglA (bglA).